The chain runs to 535 residues: Glucose-6-phosphate isomerase (535 aa).

Glu-359 serves as the catalytic Proton donor. Active-site residues include His-390 and Lys-505.

This sequence belongs to the GPI family.

It is found in the cytoplasm. The enzyme catalyses alpha-D-glucose 6-phosphate = beta-D-fructose 6-phosphate. It functions in the pathway carbohydrate biosynthesis; gluconeogenesis. It participates in carbohydrate degradation; glycolysis; D-glyceraldehyde 3-phosphate and glycerone phosphate from D-glucose: step 2/4. Catalyzes the reversible isomerization of glucose-6-phosphate to fructose-6-phosphate. This Treponema pallidum (strain Nichols) protein is Glucose-6-phosphate isomerase.